A 250-amino-acid chain; its full sequence is UPF0193 protein EVG1 homolog (250 aa).

The disordered stretch occupies residues Glu86–Lys110.

It belongs to the UPF0193 (EVG1) family.

The chain is UPF0193 protein EVG1 homolog from Drosophila melanogaster (Fruit fly).